Here is a 429-residue protein sequence, read N- to C-terminus: 3-phosphoshikimate 1-carboxyvinyltransferase (429 aa).

Positions 23, 24, and 28 each coordinate 3-phosphoshikimate. A phosphoenolpyruvate-binding site is contributed by lysine 23. Phosphoenolpyruvate-binding residues include glycine 95 and arginine 123. Positions 168, 170, 316, and 343 each coordinate 3-phosphoshikimate. Phosphoenolpyruvate is bound at residue glutamine 170. Aspartate 316 serves as the catalytic Proton acceptor. Residues arginine 347 and arginine 389 each contribute to the phosphoenolpyruvate site.

It belongs to the EPSP synthase family. Monomer.

Its subcellular location is the cytoplasm. It catalyses the reaction 3-phosphoshikimate + phosphoenolpyruvate = 5-O-(1-carboxyvinyl)-3-phosphoshikimate + phosphate. It functions in the pathway metabolic intermediate biosynthesis; chorismate biosynthesis; chorismate from D-erythrose 4-phosphate and phosphoenolpyruvate: step 6/7. In terms of biological role, catalyzes the transfer of the enolpyruvyl moiety of phosphoenolpyruvate (PEP) to the 5-hydroxyl of shikimate-3-phosphate (S3P) to produce enolpyruvyl shikimate-3-phosphate and inorganic phosphate. The protein is 3-phosphoshikimate 1-carboxyvinyltransferase of Bacillus anthracis (strain A0248).